The chain runs to 126 residues: Protein ApaG (126 aa).

The region spanning 2 to 126 (SALDDSIRVE…FRLALPGLLH (125 aa)) is the ApaG domain.

In Shewanella sp. (strain ANA-3), this protein is Protein ApaG.